Consider the following 533-residue polypeptide: MSWAARPPFLPQRHAAGQCGPVGVRKEMHCGVASRWRRRRPWLDPAAAAAAAAAAGEQQTPEPEPGEAGRDGMGDSGRDSRSPDSSSPNPLSQGAPPPSPPGLPLPPSSAPTLGGSGAPPPPPMPPPQLGSPFPVISSSMGSPGLPPPAPPGFSGPVSSPQINSTVSLPGGGSGPPEDVKPPVLGVRGLHCPPPPGGPGAGKRLCAICGDRSSGKHYGVYSCEGCKGFFKRTIRKDLTYSCRDNKDCTVDKRQRNRCQYCRYQKCLATGMKREAVQEERQRGKDKDGDGEGAGGAPEEMPVDRILEAELAVEQKSDQGVEGPGGTGGSGSSPNDPVTNICQAADKQLFTLVEWAKRIPHFSSLPLDDQVILLRAGWNELLIASFSHRSIDVRDGILLATGLHVHRNSAHSAGVGAIFDRVLTELVSKMRDMRMDKTELGCLRAIILFNPDAKGLSNPSEVEVLREKVYASLETYCKQKYPEQQGRFAKLLLRLPALRSIGLKCLEHLFFFKLIGDTPIDTFLMEMLEAPHQLA.

The disordered stretch occupies residues 1–24 (MSWAARPPFLPQRHAAGQCGPVGV). Positions 1–204 (MSWAARPPFL…PGGPGAGKRL (204 aa)) are modulating. Omega-N-methylarginine is present on Arg-25. Positions 37 to 183 (RRRRPWLDPA…GPPEDVKPPV (147 aa)) are disordered. A compositionally biased stretch (low complexity) spans 46–61 (AAAAAAAAAAGEQQTP). Residues 67–82 (EAGRDGMGDSGRDSRS) show a composition bias toward basic and acidic residues. The segment covering 83 to 94 (PDSSSPNPLSQG) has biased composition (low complexity). Composition is skewed to pro residues over residues 95–109 (APPP…PPSS) and 118–129 (APPPPPMPPPQL). Positions 130-143 (GSPFPVISSSMGSP) are enriched in low complexity. The span at 144–153 (GLPPPAPPGF) shows a compositional bias: pro residues. NR C4-type zinc fingers lie at residues 205 to 225 (CAIC…CEGC) and 241 to 265 (CRDN…YQKC). The segment at residues 205-270 (CAICGDRSSG…RYQKCLATGM (66 aa)) is a DNA-binding region (nuclear receptor). The interval 271–295 (KREAVQEERQRGKDKDGDGEGAGGA) is hinge. The segment covering 276–288 (QEERQRGKDKDGD) has biased composition (basic and acidic residues). 2 disordered regions span residues 276–299 (QEER…PEEM) and 313–336 (QKSD…NDPV). One can recognise an NR LBD domain in the interval 296–529 (PEEMPVDRIL…TFLMEMLEAP (234 aa)). Over residues 320 to 329 (EGPGGTGGSG) the composition is skewed to gly residues.

This sequence belongs to the nuclear hormone receptor family. NR2 subfamily. As to quaternary structure, homodimer (in vitro). Heterodimer with other retinoic acid receptor family members. Binds DNA preferentially as a RAR/RXR heterodimer. Interacts with NR1H3. Interacts with AKAP13.

It is found in the nucleus. The protein localises to the cytoplasm. Functionally, receptor for retinoic acid. Retinoic acid receptors bind as heterodimers to their target response elements in response to their ligands, all-trans or 9-cis retinoic acid, and regulate gene expression in various biological processes. The RAR/RXR heterodimers bind to the retinoic acid response elements (RARE). The protein is Retinoic acid receptor RXR-beta (RXRB) of Canis lupus familiaris (Dog).